A 307-amino-acid polypeptide reads, in one-letter code: Metapyrocatechase (307 aa).

2 VOC domains span residues 7 to 122 (RPGH…LYAD) and 150 to 269 (RFDH…VFCG). Residues H153, H214, and E265 each coordinate Fe cation.

This sequence belongs to the extradiol ring-cleavage dioxygenase family. Homotetramer. Fe(2+) is required as a cofactor.

It carries out the reaction catechol + O2 = (2Z,4E)-2-hydroxy-6-oxohexa-2,4-dienoate + H(+). Its pathway is xenobiotic degradation; toluene degradation. In Pseudomonas aeruginosa, this protein is Metapyrocatechase (bztE).